A 30-amino-acid chain; its full sequence is Diuretic hormone 2 (30 aa).

A Valine amide modification is found at valine 30.

It belongs to the sauvagine/corticotropin-releasing factor/urotensin I family.

Its subcellular location is the secreted. Regulation of fluid secretion. The protein is Diuretic hormone 2 of Manduca sexta (Tobacco hawkmoth).